A 74-amino-acid polypeptide reads, in one-letter code: U3-agatoxin-Ao1f (74 aa).

Positions Met1 to Ala20 are cleaved as a signal peptide. The propeptide occupies Val21–Arg34. 4 disulfide bridges follow: Cys37-Cys53, Cys44-Cys58, Cys52-Cys68, and Cys60-Cys66. The residue at position 72 (Asn72) is an Asparagine amide.

It belongs to the neurotoxin 07 (Beta/delta-agtx) family. 03 (aga-4) subfamily. Aga sub-subfamily. In terms of tissue distribution, expressed by the venom gland.

Its subcellular location is the secreted. Insecticidal neurotoxin that modulates the insect Nav channel (DmNaV1/tipE (para/tipE)) in a unique manner, with both the activation and inactivation processes being affected. The voltage dependence of activation is shifted toward more hyperpolarized potentials (analogous to site 4 toxins) and a non-inactivating persistent sodium current is induced (site 3-like action). Interestingly, both effects take place in a voltage-dependent manner, producing a bell-shaped curve between -80 and 0 mV. In vivo, induces an irreversible spastic paralysis when injected into insects. The sequence is that of U3-agatoxin-Ao1f from Agelena orientalis (Funnel-web spider).